Here is a 415-residue protein sequence, read N- to C-terminus: Squalene synthase clz20 (415 aa).

Asn114 is a glycosylation site (N-linked (GlcNAc...) asparagine). A helical transmembrane segment spans residues 395-415; the sequence is ADTMYLAVLVLGVFGVVAAIL.

It belongs to the phytoene/squalene synthase family. Mg(2+) is required as a cofactor.

It localises to the membrane. The enzyme catalyses 2 (2E,6E)-farnesyl diphosphate + NADH + H(+) = squalene + 2 diphosphate + NAD(+). It catalyses the reaction 2 (2E,6E)-farnesyl diphosphate + NADPH + H(+) = squalene + 2 diphosphate + NADP(+). Its pathway is terpene metabolism; lanosterol biosynthesis; lanosterol from farnesyl diphosphate: step 1/3. Its function is as follows. Squalene synthase; part of the gene cluster that mediates the biosynthesis of squalestatin S1 (SQS1, also known as zaragozic acid A), a heavily oxidized fungal polyketide that offers potent cholesterol lowering activity by targeting squalene synthase (SS). Catalyzes the condensation of 2 two farnesyl pyrophosphate moieties to form squalene. The presence of a gene encoding a squalene synthase supports the identification of the cluster as being responsible for SQS1 production and suggests a likely mechanism for self-resistance. The polypeptide is Squalene synthase clz20 (Cochliobolus lunatus (Filamentous fungus)).